A 271-amino-acid polypeptide reads, in one-letter code: MVVAKKSLGQHFLTDESFLDRIVNALPPLNPLKLIEIGVGLGDLTLKLLDRYPLKTYEIDSNLCEKMRSKLKAQKKPFKLELVEKDALFLKEEEPYFLISNLPYYIATRLVLNALKDPKCRGLLVMTQKEVALKFCTKDSQNALSVLVHTIGNATLLFDVPPSAFSPPPKVFSSVFEVIKEPLKEKALASLTQVPFFEEALQKGFETLEDFLKACFSSPRKTLSNNLKKSVSYREKLDKVLDFLALESQPTSVRASEVKDYLKLLEYLLKG.

The S-adenosyl-L-methionine site is built by His11, Leu13, Gly38, Glu58, Asp86, and Asn101.

The protein belongs to the class I-like SAM-binding methyltransferase superfamily. rRNA adenine N(6)-methyltransferase family. RsmA subfamily.

It localises to the cytoplasm. It carries out the reaction adenosine(1518)/adenosine(1519) in 16S rRNA + 4 S-adenosyl-L-methionine = N(6)-dimethyladenosine(1518)/N(6)-dimethyladenosine(1519) in 16S rRNA + 4 S-adenosyl-L-homocysteine + 4 H(+). Functionally, specifically dimethylates two adjacent adenosines (A1518 and A1519) in the loop of a conserved hairpin near the 3'-end of 16S rRNA in the 30S particle. May play a critical role in biogenesis of 30S subunits. The sequence is that of Ribosomal RNA small subunit methyltransferase A from Helicobacter pylori (strain P12).